A 619-amino-acid chain; its full sequence is Leucine aminopeptidase 2 (619 aa).

A peptide is bound by residues 141–143 (QCQ) and 273–278 (PYGGME). A Zn(2+)-binding site is contributed by histidine 302. Catalysis depends on glutamate 303, which acts as the Proton acceptor. Zn(2+) is bound by residues histidine 306 and glutamate 325. Tyrosine 390 functions as the Proton donor in the catalytic mechanism.

The protein belongs to the peptidase M1 family. Requires Zn(2+) as cofactor.

Its subcellular location is the cytoplasm. It localises to the nucleus. It catalyses the reaction an epoxide + H2O = an ethanediol. Functionally, aminopeptidase that preferentially cleaves di- and tripeptides. Also has low epoxide hydrolase activity (in vitro). Can hydrolyze the epoxide leukotriene LTA(4) but it forms preferentially 5,6-dihydroxy-7,9,11,14-eicosatetraenoic acid rather than the cytokine leukotriene B(4) as the product compared to the homologous mammalian enzyme (in vitro). The polypeptide is Leucine aminopeptidase 2 (Coccidioides immitis (strain RS) (Valley fever fungus)).